Reading from the N-terminus, the 179-residue chain is MSKLPIVIAPDERLTTRASEVIDITDKIKELVNDMFETMYYAEGLGLAAVQVGVLKRIFIMDVQPEKAEDGPAGYESTGKFCMINPEITELSGEQVILKEGCLSIPEQSHEIKRPKYLTVKYKNLNNEEQTLKASGWLARCIQHELDHLNGILYVRHLSKLKYDMAMKKAQKVKRHYEQ.

Residues cysteine 102 and histidine 144 each coordinate Fe cation. Glutamate 145 is an active-site residue. Residue histidine 148 coordinates Fe cation.

This sequence belongs to the polypeptide deformylase family. Fe(2+) is required as a cofactor.

It catalyses the reaction N-terminal N-formyl-L-methionyl-[peptide] + H2O = N-terminal L-methionyl-[peptide] + formate. Its function is as follows. Removes the formyl group from the N-terminal Met of newly synthesized proteins. Requires at least a dipeptide for an efficient rate of reaction. N-terminal L-methionine is a prerequisite for activity but the enzyme has broad specificity at other positions. The sequence is that of Peptide deformylase from Wolbachia pipientis subsp. Culex pipiens (strain wPip).